We begin with the raw amino-acid sequence, 480 residues long: Glutamate--tRNA ligase (480 aa).

Residues 21 to 31 (PSPTGYLHVGG) carry the 'HIGH' region motif. Residues Cys110, Cys112, Cys137, and His139 each contribute to the Zn(2+) site. The short motif at 248–252 (KLSKR) is the 'KMSKS' region element. ATP is bound at residue Lys251.

Belongs to the class-I aminoacyl-tRNA synthetase family. Glutamate--tRNA ligase type 1 subfamily. As to quaternary structure, monomer. Requires Zn(2+) as cofactor.

Its subcellular location is the cytoplasm. It catalyses the reaction tRNA(Glu) + L-glutamate + ATP = L-glutamyl-tRNA(Glu) + AMP + diphosphate. Catalyzes the attachment of glutamate to tRNA(Glu) in a two-step reaction: glutamate is first activated by ATP to form Glu-AMP and then transferred to the acceptor end of tRNA(Glu). The protein is Glutamate--tRNA ligase of Haemophilus influenzae (strain 86-028NP).